The chain runs to 409 residues: Arginine deiminase (409 aa).

Cys-399 (amidino-cysteine intermediate) is an active-site residue.

It belongs to the arginine deiminase family.

It localises to the cytoplasm. It catalyses the reaction L-arginine + H2O = L-citrulline + NH4(+). It functions in the pathway amino-acid degradation; L-arginine degradation via ADI pathway; carbamoyl phosphate from L-arginine: step 1/2. The protein is Arginine deiminase of Borrelia duttonii (strain Ly).